The chain runs to 88 residues: Cell division topological specificity factor (88 aa).

It belongs to the MinE family.

In terms of biological role, prevents the cell division inhibition by proteins MinC and MinD at internal division sites while permitting inhibition at polar sites. This ensures cell division at the proper site by restricting the formation of a division septum at the midpoint of the long axis of the cell. The polypeptide is Cell division topological specificity factor (Paracidovorax citrulli (strain AAC00-1) (Acidovorax citrulli)).